Consider the following 61-residue polypeptide: Large ribosomal subunit protein uL30 (61 aa).

This sequence belongs to the universal ribosomal protein uL30 family. Part of the 50S ribosomal subunit.

The sequence is that of Large ribosomal subunit protein uL30 from Rhizorhabdus wittichii (strain DSM 6014 / CCUG 31198 / JCM 15750 / NBRC 105917 / EY 4224 / RW1) (Sphingomonas wittichii).